A 958-amino-acid chain; its full sequence is Eukaryotic translation initiation factor 3 subunit A (958 aa).

A coiled-coil region spans residues Met93–Lys123. A PCI domain is found at Leu316–Leu513. 2 coiled-coil regions span residues Glu548–Glu696 and Leu796–Ser861. The span at Lys804–Arg859 shows a compositional bias: basic and acidic residues. The tract at residues Lys804–Arg958 is disordered. Low complexity predominate over residues Pro877–Pro894. Residues Lys929 to Pro942 show a composition bias toward basic and acidic residues. Residues Gly946–Arg958 show a composition bias toward polar residues.

Belongs to the eIF-3 subunit A family. In terms of assembly, component of the eukaryotic translation initiation factor 3 (eIF-3) complex.

It localises to the cytoplasm. In terms of biological role, RNA-binding component of the eukaryotic translation initiation factor 3 (eIF-3) complex, which is involved in protein synthesis of a specialized repertoire of mRNAs and, together with other initiation factors, stimulates binding of mRNA and methionyl-tRNAi to the 40S ribosome. The eIF-3 complex specifically targets and initiates translation of a subset of mRNAs involved in cell proliferation. This chain is Eukaryotic translation initiation factor 3 subunit A (TIF3A1), found in Nicotiana tabacum (Common tobacco).